A 163-amino-acid polypeptide reads, in one-letter code: Superoxide dismutase [Mn] (163 aa).

Residues His2, His50, Asp134, and His138 each contribute to the Mn(2+) site.

It belongs to the iron/manganese superoxide dismutase family. Mn(2+) serves as cofactor.

It carries out the reaction 2 superoxide + 2 H(+) = H2O2 + O2. Destroys superoxide anion radicals which are normally produced within the cells and which are toxic to biological systems. In Mycobacterium scrofulaceum, this protein is Superoxide dismutase [Mn] (sodA).